The primary structure comprises 109 residues: Nucleoid-associated protein VV1_2004 (109 aa).

Belongs to the YbaB/EbfC family. As to quaternary structure, homodimer.

It localises to the cytoplasm. The protein resides in the nucleoid. Functionally, binds to DNA and alters its conformation. May be involved in regulation of gene expression, nucleoid organization and DNA protection. The polypeptide is Nucleoid-associated protein VV1_2004 (Vibrio vulnificus (strain CMCP6)).